The primary structure comprises 207 residues: Ribosomal RNA small subunit methyltransferase G (207 aa).

Residues glycine 75, phenylalanine 80, leucine 126–glutamate 127, and arginine 140 each bind S-adenosyl-L-methionine.

This sequence belongs to the methyltransferase superfamily. RNA methyltransferase RsmG family.

It is found in the cytoplasm. It carries out the reaction guanosine(527) in 16S rRNA + S-adenosyl-L-methionine = N(7)-methylguanosine(527) in 16S rRNA + S-adenosyl-L-homocysteine. In terms of biological role, specifically methylates the N7 position of guanine in position 527 of 16S rRNA. This is Ribosomal RNA small subunit methyltransferase G from Erythrobacter litoralis (strain HTCC2594).